We begin with the raw amino-acid sequence, 1531 residues long: MEYFLGGYVYMNGDALKIQPPVYTNVPVETAMLATNLFGATTQIAASPAAAAAAHIPLITAAAAAAAAAGAPAVAPPVAVAPVATASAAQAAVVPAQQQQQAHPHQAQILAHTHVAHQQQQQQQQQTIQQHLHQQQQQQSPHPAQHLTYGHQPALSQATAGGSGTISGGAVGPSGVVVEGQDTNEYAIMNGALGQTQDGTVVCYTTDALNNTNLVALDPQPHQIVVPVQVPVQVPVPVQLPANGSADPQQGSHNAAGGEEPNIPLDKLKQMLATQLEYYFSRENLANDTYLLSQMDSDQYVPIYTVARFNLVRKLTNDINLITEVLRESPNVQVDDKGLRVRPNRKRCIIILREISNNTPLDDVKALFSNESCPRPISCEFAANNSWYITFESDEDAQKAYKYLREEVKEFQGKPIMARIKPKSFINRIQAVPKNGYRLTSPPTANVFDPAGAGGATVSYAAAQQPRYLYTNGAAIAAPASVQYSNPVLIPIPQNQFYPGLVAGPWPPGTVAATTAHGQNFYELGGNIFTTNPLPPQPVTAGFAQAPPPTSQAMVTPKPQGGGRYNNNHRGNPNNVGGANSGPRAESRSKPPRSTPSASHIQGGNIMPIQITAPIPGGMVSVVPTNIVQDPLQPAPLQQQPQQVIQQIQQQPSSSAQQQQAATVQMNNTTRHYPIKSNWKGGMQKNLDKSYSGGVATHHHYTTQVQALPAHSHHLQAQQQLQGQTQQQHYQLASSSAASAPQVTYVTTAPAPQQPGQHQHHLVVQQTQPQQQQQQQQVVLQQQQVQVQELQEAGDGVEHSSHAMQQVNRSSNMSASSSSSLATSMSKEPLQWQNRPRRRRRDEEGGINYSPGGRVGLYGSSPSNPHPQQHLMSSSTGSNVQSAGGTDGGGASHRGGERQSHYNTIHDVPPPQHRGNYKGNNYNPHYHAQHSSMASGSHHHHHHNALSSQQQQHHLTTGTGQQGSGHHYHHHHHHNSIGSNVGNSGGLGVSSGGSGGGGSGGGSGSNSLSGGSNERGIHHSSLGYQGHQHQHQQQQQQQQQQQQQQPAAPVQPPQFDLEDAAFPPLPATSATAPHTPQATGGASLHNSTTSSSSSTGLGQKQTLHQQQQQAPQQHQVLSSSVESAGGDEQRSSNQQGIETSNIHLANSSTANNWVENRLSDVVRTGGGGGGGGKGKARKDNRHPQGQNQPHMAPNYQQHQPRNPPVSPTPALGAEYGIQIQEGNNTKNVTKQSSSNNNSIHVIKCQTPNINASSKEEAAGAQQQQQQQLDKSNKTEDEMHPKQPSQQRLVEGYVQQQQLPLLAAHNEYSAALAAGAGACSVVEGGLTTSLAECSLGQHKKPPSVAALHAKKDANLLEKGASKHKSVATSTSTENLSAAATASKLSYAQVAQHHKAAASSDSKETGSGGSTGTLSPTGSHKMDLVFGDPAVVVAAVEKSGLATVSTEKRVAGGASPAALIGKPAGGLPATNTTQGSSAVVVSAKEKDNRPNASVRPLSKEKQQQHYGSATEHNTNANIGLGASGNRKSRANNS.

Low complexity predominate over residues 112–147; that stretch reads HTHVAHQQQQQQQQQTIQQHLHQQQQQQSPHPAQHL. Disordered stretches follow at residues 112–148 and 239–263; these read HTHV…QHLT and QLPA…EPNI. The 90-residue stretch at 262 to 351 folds into the HTH La-type RNA-binding domain; that stretch reads NIPLDKLKQM…RPNRKRCIII (90 aa). One can recognise an RRM domain in the interval 348-423; that stretch reads CIIILREISN…KPIMARIKPK (76 aa). 6 disordered regions span residues 533-605, 710-736, 748-768, 791-1135, 1160-1211, and 1251-1285; these read PLPP…QGGN, AHSH…ASSS, TAPA…QQTQ, QEAG…SNQQ, DVVR…TPAL, and ASSK…QPSQ. The span at 565–578 shows a compositional bias: low complexity; the sequence is YNNNHRGNPNNVGG. Low complexity-rich tracts occupy residues 754–768 and 810–826; these read QPGQ…QQTQ and SSNM…TSMS. Residues 860–884 are compositionally biased toward polar residues; the sequence is SSPSNPHPQQHLMSSSTGSNVQSAG. The span at 945 to 959 shows a compositional bias: low complexity; that stretch reads ALSSQQQQHHLTTGT. The span at 966 to 975 shows a compositional bias: basic residues; sequence HHYHHHHHHN. The span at 983 to 1004 shows a compositional bias: gly residues; the sequence is NSGGLGVSSGGSGGGGSGGGSG. The segment covering 1031–1045 has biased composition (low complexity); the sequence is HQQQQQQQQQQQQQQ. The span at 1068 to 1086 shows a compositional bias: polar residues; sequence TSATAPHTPQATGGASLHN. The span at 1087–1115 shows a compositional bias: low complexity; that stretch reads STTSSSSSTGLGQKQTLHQQQQQAPQQHQ. The residue at position 1123 (serine 1123) is a Phosphoserine. A compositionally biased stretch (gly residues) spans 1164 to 1173; the sequence is TGGGGGGGGK. Polar residues predominate over residues 1183–1200; the sequence is PQGQNQPHMAPNYQQHQP. Basic and acidic residues predominate over residues 1270 to 1280; the sequence is KSNKTEDEMHP. Serine 1370 and serine 1413 each carry phosphoserine. Disordered stretches follow at residues 1393-1418 and 1450-1531; these read KAAA…TGSH and GGAS…ANNS. Composition is skewed to polar residues over residues 1467–1477 and 1502–1515; these read ATNTTQGSSAV and QHYG…TNAN.

In terms of biological role, probable RNA binding protein. Negatively regulates myc at the protein level, via an unknown mechanism, and may therefore have a role in growth. Has no effect on myc mRNA levels. The polypeptide is La-related protein Larp4B (Drosophila melanogaster (Fruit fly)).